The primary structure comprises 629 residues: Phosphomethylpyrimidine synthase (629 aa).

Residues Asn-215, Met-244, Tyr-273, His-309, 329-331 (SRG), 370-373 (DGLR), and Glu-409 each bind substrate. Residue His-413 participates in Zn(2+) binding. Tyr-436 is a substrate binding site. His-477 is a Zn(2+) binding site. Positions 557, 560, and 565 each coordinate [4Fe-4S] cluster. A disordered region spans residues 589-610 (ENIKRETSAEEAEEAREGMSDM).

The protein belongs to the ThiC family. Homodimer. It depends on [4Fe-4S] cluster as a cofactor.

It catalyses the reaction 5-amino-1-(5-phospho-beta-D-ribosyl)imidazole + S-adenosyl-L-methionine = 4-amino-2-methyl-5-(phosphooxymethyl)pyrimidine + CO + 5'-deoxyadenosine + formate + L-methionine + 3 H(+). It functions in the pathway cofactor biosynthesis; thiamine diphosphate biosynthesis. Its function is as follows. Catalyzes the synthesis of the hydroxymethylpyrimidine phosphate (HMP-P) moiety of thiamine from aminoimidazole ribotide (AIR) in a radical S-adenosyl-L-methionine (SAM)-dependent reaction. The polypeptide is Phosphomethylpyrimidine synthase (Erythrobacter litoralis (strain HTCC2594)).